The sequence spans 447 residues: C4-dicarboxylate transport protein (447 aa).

A run of 9 helical transmembrane segments spans residues 13-33, 49-69, 81-101, 149-169, 189-209, 227-247, 302-322, 336-356, and 357-377; these read SLYFQVITAIVIGVLLGHYWP, LIKMIIAPIIFCTVVVGIAGM, LALLYFEVVSTLALLLGLLIV, AFAKGEMLQVLLFSVMFGFAL, VLFAIVGFIMKVAPIGAFGAM, LMGTFYATCLVFIFGVLGLIA, GYSFNLDGTSIYLTMAAVFIA, TLLAVLLLTSKGAAGVTGSGF, and IVLAATLSAVGGVPVAGLALI. The tract at residues 422–447 is disordered; it reads ETEAEANEPEAVLDEIDQHMPVPAAR. The span at 425–436 shows a compositional bias: acidic residues; sequence AEANEPEAVLDE.

Belongs to the dicarboxylate/amino acid:cation symporter (DAACS) (TC 2.A.23) family.

Its subcellular location is the cell inner membrane. Functionally, responsible for the transport of dicarboxylates such as succinate, fumarate, and malate from the periplasm across the membrane. This Leptothrix cholodnii (strain ATCC 51168 / LMG 8142 / SP-6) (Leptothrix discophora (strain SP-6)) protein is C4-dicarboxylate transport protein.